Here is a 196-residue protein sequence, read N- to C-terminus: MADS-box protein FLOWERING LOCUS C (196 aa).

An MADS-box domain is found at 1–61 (MGRKKLEIKR…GKLYSFSSGD (61 aa)). The Nuclear localization signal signature appears at 8–15 (IKRIENKS). The K-box domain maps to 80–170 (ALDHQSKALN…ASQMENNHHV (91 aa)).

In terms of tissue distribution, high expression in the vegetative apex and in root tissue and lower expression in leaves and stems. Not detected in young tissues of the inflorescence. Before fertilization, expressed in ovules, but not in pollen or stamens, of non-vernalized plants. After vernalization, not detected in ovules.

The protein localises to the nucleus. Its function is as follows. Putative transcription factor that seems to play a central role in the regulation of flowering time in the late-flowering phenotype by interacting with 'FRIGIDA', the autonomous and the vernalization flowering pathways. Inhibits flowering by repressing 'SUPPRESSOR OF OVEREXPRESSION OF CONSTANS 1'. At elevated temperatures (e.g. 29 degrees Celsius), maintained at high levels in a JMJ30/JMJ32-dependent manner to prevent extreme precocious flowering. The protein is MADS-box protein FLOWERING LOCUS C of Arabidopsis thaliana (Mouse-ear cress).